The sequence spans 178 residues: uncharacterized protein (178 aa).

5 consecutive transmembrane segments (helical) span residues 1–21 (MISI…YGGG), 47–67 (MLAL…AYVG), 75–95 (GFLI…IVLL), 117–137 (VIAV…IKAI), and 158–178 (MHPA…IPYL).

Belongs to the chromate ion transporter (CHR) (TC 2.A.51) family.

It localises to the cell membrane. This is an uncharacterized protein from Bacillus subtilis (strain 168).